The sequence spans 842 residues: Glucans biosynthesis glucosyltransferase H (842 aa).

Transmembrane regions (helical) follow at residues 140–160, 194–214, 513–533, 568–588, 615–635, 656–676, and 680–700; these read ILLL…KTIL, ILIL…TALM, VFLT…FLAL, IALF…SIIL, VLLA…AFLG, FMRH…MAWL, and FLFW…VSAI.

The protein belongs to the glycosyltransferase 2 family. OpgH subfamily.

It localises to the cell inner membrane. It functions in the pathway glycan metabolism; osmoregulated periplasmic glucan (OPG) biosynthesis. Involved in the biosynthesis of osmoregulated periplasmic glucans (OPGs). In Klebsiella pneumoniae subsp. pneumoniae (strain ATCC 700721 / MGH 78578), this protein is Glucans biosynthesis glucosyltransferase H.